We begin with the raw amino-acid sequence, 214 residues long: Peptide methionine sulfoxide reductase B1, chloroplastic (214 aa).

A chloroplast-targeting transit peptide spans 1 to 53 (MAMRQYAAATAASSSFRARPRARPSCLPAAALPLAPCCGVAWSRASYRRASVR). Residues 58–81 (ASSSSSSSSSSPSPQGQAQAQAQG) are compositionally biased toward low complexity. The segment at 58 to 91 (ASSSSSSSSSSPSPQGQAQAQAQGKPNYSTSLTD) is disordered. The region spanning 91 to 213 (DEEWRKRLTK…NSASLKLKKT (123 aa)) is the MsrB domain. Zn(2+)-binding residues include Cys-130, Cys-133, Cys-179, and Cys-182. The Nucleophile role is filled by Cys-202.

It belongs to the MsrB Met sulfoxide reductase family. It depends on Zn(2+) as a cofactor. Expressed in leaves and flowers.

The protein resides in the plastid. It localises to the chloroplast. It carries out the reaction L-methionyl-[protein] + [thioredoxin]-disulfide + H2O = L-methionyl-(R)-S-oxide-[protein] + [thioredoxin]-dithiol. Its function is as follows. Catalyzes the reduction of methionine sulfoxide (MetSO) to methionine in proteins. Involved in abiotic stress response. Plays a protective role against oxidative stress by restoring activity to proteins that have been inactivated by methionine oxidation. MSRB family specifically reduces the MetSO R-enantiomer. In Oryza sativa subsp. japonica (Rice), this protein is Peptide methionine sulfoxide reductase B1, chloroplastic.